A 737-amino-acid chain; its full sequence is NAD-dependent protein deacetylase sirtuin-1 (737 aa).

The segment covering methionine 1–alanine 28 has biased composition (low complexity). Disordered regions lie at residues methionine 1–proline 56 and glutamate 75–alanine 125. Alanine 2 carries the N-acetylalanine modification. Positions alanine 2–alanine 131 are interaction with CLOCK. The tract at residues alanine 2–arginine 268 is interaction with H1-4. 2 positions are modified to phosphoserine: serine 14 and serine 25. A Nuclear localization signal motif is present at residues leucine 32 to aspartate 39. Phosphoserine; by MAPK8 is present on serine 46. Low complexity-rich tracts occupy residues serine 46–proline 56 and glutamate 75–glycine 94. The segment covering aspartate 111 to alanine 123 has biased composition (acidic residues). The interval arginine 135 to proline 533 is interaction with CCAR2. A Nuclear export signal motif is present at residues leucine 138 to leucine 145. Serine 151, serine 154, serine 164, and serine 165 each carry phosphoserine. The tract at residues cysteine 152–arginine 171 is disordered. The short motif at proline 223–lysine 230 is the Nuclear localization signal element. The Deacetylase sirtuin-type domain occupies lysine 228 to glutamate 488. Lysine 230 carries the N6-acetyllysine modification. Positions isoleucine 248–leucine 251 are required for interaction with the sumoylated form of CCAR2. Residues glycine 253–tyrosine 272 and glutamine 337–aspartate 340 contribute to the NAD(+) site. The Proton acceptor role is filled by histidine 355. Residues cysteine 363 and cysteine 366 each coordinate Zn(2+). Lysine 369 is modified (N6-acetyllysine). 2 residues coordinate Zn(2+): cysteine 387 and cysteine 390. S-nitrosocysteine occurs at positions 387 and 390. An N6-acetyllysine modification is found at lysine 422. The Nuclear export signal motif lies at valine 425–isoleucine 431. NAD(+)-binding positions include glycine 432–serine 434, asparagine 457–glutamate 459, and cysteine 474. Lysine 505 carries the post-translational modification N6-acetyllysine. Residues valine 514 to glutamine 539 are disordered. A Phosphothreonine; by DYRK1A, DYRK3 and MAPK8 modification is found at threonine 522. Serine 527 is modified (phosphoserine). Over residues aspartate 529–glutamine 539 the composition is skewed to polar residues. Threonine 536 carries the post-translational modification Phosphothreonine. An N6-acetyllysine modification is found at lysine 600. Phosphoserine; by CaMK2 occurs at positions 649 and 651. A disordered region spans residues aspartate 653 to aspartate 713. The span at leucine 656 to glutamate 676 shows a compositional bias: low complexity. The span at glutamate 677–glutamate 697 shows a compositional bias: acidic residues. Serine 737 is subject to Phosphoserine.

This sequence belongs to the sirtuin family. Class I subfamily. Interacts with XBP1 isoform 2. Found in a complex with PCAF and MYOD1 Component of the eNoSC complex, composed of SIRT1, SUV39H1 and RRP8. Interacts with HES1, HEY2 and PML. Interacts with RPS19BP1/AROS. Interacts with CCAR2 (via N-terminus); the interaction disrupts the interaction between SIRT1 and p53/TP53. Interacts with SETD7; the interaction induces the dissociation of SIRT1 from p53/TP53 and increases p53/TP53 activity. Interacts with MYCN, NR1I2, CREBZF, TSC2, TLE1, FOS, JUN, NR0B2, PPARG, NCOR, IRS1, IRS2 and NMNAT1. Interacts with HNF1A; the interaction occurs under nutrient restriction. Interacts with SUZ12; the interaction mediates the association with the PRC4 histone methylation complex which is specific as an association with PCR2 and PCR3 complex variants is not found. Interacts with FOXO1; the interaction deacetylates FOXO1, enhances its DNA-binding ability and increases its transcriptional activity. Interacts with BCL6; leads to a epigenetic repression of specific target genes. Interacts with CLOCK, BMAL1 and PER2. Interacts with PPARA; the interaction seems to be modulated by NAD(+) levels. Interacts with NR1H3 and this interaction is inhibited in the presence of CCAR2. Interacts with CHEK2 and p53/TP53. Exhibits a preferential interaction with sumoylated CCAR2 over its unmodified form. Interacts with PACS2. Interacts with SIRT7. Interacts with PUS7. Interacts with TULP3. Interacts with MORN3; the interaction enhances the ubiquitination of p53/TP53. Zn(2+) is required as a cofactor. In terms of processing, methylated on multiple lysine residues; methylation is enhanced after DNA damage and is dispensable for deacetylase activity toward p53/TP53. Phosphorylated. Phosphorylated by STK4/MST1, resulting in inhibition of SIRT1-mediated p53/TP53 deacetylation. Phosphorylation by MAPK8/JNK1 at Ser-46 and Thr-522 leads to increased nuclear localization and enzymatic activity. Phosphorylation at Thr-522 by DYRK1A and DYRK3 activates deacetylase activity and promotes cell survival. Phosphorylation by mammalian target of rapamycin complex 1 (mTORC1) at Ser-46 inhibits deacetylation activity. Phosphorylated by CaMK2, leading to increased p53/TP53 and NF-kappa-B p65/RELA deacetylation activity. Post-translationally, proteolytically cleaved by cathepsin B upon TNF-alpha treatment to yield catalytic inactive but stable SirtT1 75 kDa fragment (75SirT1). In terms of processing, S-nitrosylated by GAPDH, leading to inhibit the NAD-dependent protein deacetylase activity. Acetylated at various Lys residues. Deacetylated via an autocatalytic mechanism. Autodeacetylation at Lys-230 promotes its protein deacetylase activity. Post-translationally, ubiquitinated; leading to degradation. Deubiquitinated by USP22; leading to stabilization. In terms of tissue distribution, widely expressed. Weakly expressed in liver and skeletal muscle.

Its subcellular location is the nucleus. It localises to the PML body. It is found in the cytoplasm. The protein resides in the mitochondrion. It carries out the reaction N(6)-acetyl-L-lysyl-[protein] + NAD(+) + H2O = 2''-O-acetyl-ADP-D-ribose + nicotinamide + L-lysyl-[protein]. It catalyses the reaction N(6)-propanoyl-L-lysyl-[protein] + NAD(+) + H2O = 3''-O-propanoyl-ADP-D-ribose + nicotinamide + L-lysyl-[protein]. The catalysed reaction is N(6)-(2E)-butenoyl-L-lysyl-[protein] + NAD(+) + H2O = 2''-O-(2E)-but-2-enoyl-ADP-D-ribose + nicotinamide + L-lysyl-[protein]. The enzyme catalyses N(6)-[(S)-lactoyl]-L-lysyl-[protein] + NAD(+) + H2O = 2''-O-(S)-lactoyl-ADP-D-ribose + nicotinamide + L-lysyl-[protein]. With respect to regulation, activated by resveratrol (3,5,4'-trihydroxy-trans-stilbene), butein (3,4,2',4'-tetrahydroxychalcone), piceatannol (3,5,3',4'-tetrahydroxy-trans-stilbene), Isoliquiritigenin (4,2',4'-trihydroxychalcone), fisetin (3,7,3',4'-tetrahydroxyflavone) and quercetin (3,5,7,3',4'-pentahydroxyflavone). MAPK8/JNK1 and RPS19BP1/AROS act as positive regulators of deacetylation activity. Inhibited by nicotinamide. Negatively regulated by CCAR2. In terms of biological role, NAD-dependent protein deacetylase that links transcriptional regulation directly to intracellular energetics and participates in the coordination of several separated cellular functions such as cell cycle, response to DNA damage, metabolism, apoptosis and autophagy. Can modulate chromatin function through deacetylation of histones and can promote alterations in the methylation of histones and DNA, leading to transcriptional repression. Deacetylates a broad range of transcription factors and coregulators, thereby regulating target gene expression positively and negatively. Serves as a sensor of the cytosolic ratio of NAD(+)/NADH which is altered by glucose deprivation and metabolic changes associated with caloric restriction. Is essential in skeletal muscle cell differentiation and in response to low nutrients mediates the inhibitory effect on skeletal myoblast differentiation which also involves 5'-AMP-activated protein kinase (AMPK) and nicotinamide phosphoribosyltransferase (NAMPT). Component of the eNoSC (energy-dependent nucleolar silencing) complex, a complex that mediates silencing of rDNA in response to intracellular energy status and acts by recruiting histone-modifying enzymes. The eNoSC complex is able to sense the energy status of cell: upon glucose starvation, elevation of NAD(+)/NADP(+) ratio activates SIRT1, leading to histone H3 deacetylation followed by dimethylation of H3 at 'Lys-9' (H3K9me2) by SUV39H1 and the formation of silent chromatin in the rDNA locus. Deacetylates 'Lys-266' of SUV39H1, leading to its activation. Inhibits skeletal muscle differentiation by deacetylating PCAF and MYOD1. Deacetylates H2A and 'Lys-26' of H1-4. Deacetylates 'Lys-16' of histone H4 (in vitro). Involved in NR0B2/SHP corepression function through chromatin remodeling: Recruited to LRH1 target gene promoters by NR0B2/SHP thereby stimulating histone H3 and H4 deacetylation leading to transcriptional repression. Proposed to contribute to genomic integrity via positive regulation of telomere length; however, reports on localization to pericentromeric heterochromatin are conflicting. Proposed to play a role in constitutive heterochromatin (CH) formation and/or maintenance through regulation of the available pool of nuclear SUV39H1. Upon oxidative/metabolic stress decreases SUV39H1 degradation by inhibiting SUV39H1 polyubiquitination by MDM2. This increase in SUV39H1 levels enhances SUV39H1 turnover in CH, which in turn seems to accelerate renewal of the heterochromatin which correlates with greater genomic integrity during stress response. Deacetylates 'Lys-382' of p53/TP53 and impairs its ability to induce transcription-dependent proapoptotic program and modulate cell senescence. Deacetylates TAF1B and thereby represses rDNA transcription by the RNA polymerase I. Deacetylates MYC, promotes the association of MYC with MAX and decreases MYC stability leading to compromised transformational capability. Deacetylates FOXO3 in response to oxidative stress thereby increasing its ability to induce cell cycle arrest and resistance to oxidative stress but inhibiting FOXO3-mediated induction of apoptosis transcriptional activity; also leading to FOXO3 ubiquitination and protesomal degradation. Appears to have a similar effect on MLLT7/FOXO4 in regulation of transcriptional activity and apoptosis. Deacetylates DNMT1; thereby impairs DNMT1 methyltransferase-independent transcription repressor activity, modulates DNMT1 cell cycle regulatory function and DNMT1-mediated gene silencing. Deacetylates RELA/NF-kappa-B p65 thereby inhibiting its transactivating potential and augments apoptosis in response to TNF-alpha. Deacetylates HIF1A, KAT5/TIP60, RB1 and HIC1. Deacetylates FOXO1, which increases its DNA binding ability and enhances its transcriptional activity leading to increased gluconeogenesis in liver. Inhibits E2F1 transcriptional activity and apoptotic function, possibly by deacetylation. Involved in HES1- and HEY2-mediated transcriptional repression. In cooperation with MYCN seems to be involved in transcriptional repression of DUSP6/MAPK3 leading to MYCN stabilization by phosphorylation at 'Ser-62'. Deacetylates MEF2D. Required for antagonist-mediated transcription suppression of AR-dependent genes which may be linked to local deacetylation of histone H3. Represses HNF1A-mediated transcription. Required for the repression of ESRRG by CREBZF. Deacetylates NR1H3 and NR1H2 and deacetylation of NR1H3 at 'Lys-434' positively regulates transcription of NR1H3:RXR target genes, promotes NR1H3 proteasomal degradation and results in cholesterol efflux; a promoter clearing mechanism after reach round of transcription is proposed. Involved in lipid metabolism: deacetylates LPIN1, thereby inhibiting diacylglycerol synthesis. Implicated in regulation of adipogenesis and fat mobilization in white adipocytes by repression of PPARG which probably involves association with NCOR1 and SMRT/NCOR2. Deacetylates p300/EP300 and PRMT1. Deacetylates ACSS2 leading to its activation, and HMGCS1 deacetylation. Involved in liver and muscle metabolism. Through deacetylation and activation of PPARGC1A is required to activate fatty acid oxidation in skeletal muscle under low-glucose conditions and is involved in glucose homeostasis. Involved in regulation of PPARA and fatty acid beta-oxidation in liver. Involved in positive regulation of insulin secretion in pancreatic beta cells in response to glucose; the function seems to imply transcriptional repression of UCP2. Proposed to deacetylate IRS2 thereby facilitating its insulin-induced tyrosine phosphorylation. Deacetylates SREBF1 isoform SREBP-1C thereby decreasing its stability and transactivation in lipogenic gene expression. Involved in DNA damage response by repressing genes which are involved in DNA repair, such as XPC and TP73, deacetylating XRCC6/Ku70, and facilitating recruitment of additional factors to sites of damaged DNA, such as SIRT1-deacetylated NBN can recruit ATM to initiate DNA repair and SIRT1-deacetylated XPA interacts with RPA2. Also involved in DNA repair of DNA double-strand breaks by homologous recombination and specifically single-strand annealing independently of XRCC6/Ku70 and NBN. Promotes DNA double-strand breaks by mediating deacetylation of SIRT6. Transcriptional suppression of XPC probably involves an E2F4:RBL2 suppressor complex and protein kinase B (AKT) signaling. Transcriptional suppression of TP73 probably involves E2F4 and PCAF. Deacetylates WRN thereby regulating its helicase and exonuclease activities and regulates WRN nuclear translocation in response to DNA damage. Deacetylates APEX1 at 'Lys-6' and 'Lys-7' and stimulates cellular AP endonuclease activity by promoting the association of APEX1 to XRCC1. Catalyzes deacetylation of ERCC4/XPF, thereby impairing interaction with ERCC1 and nucleotide excision repair (NER). Increases p53/TP53-mediated transcription-independent apoptosis by blocking nuclear translocation of cytoplasmic p53/TP53 and probably redirecting it to mitochondria. Deacetylates XRCC6/Ku70 at 'Lys-537' and 'Lys-540' causing it to sequester BAX away from mitochondria thereby inhibiting stress-induced apoptosis. Is involved in autophagy, presumably by deacetylating ATG5, ATG7 and MAP1LC3B/ATG8. Deacetylates AKT1 which leads to enhanced binding of AKT1 and PDK1 to PIP3 and promotes their activation. Proposed to play role in regulation of STK11/LBK1-dependent AMPK signaling pathways implicated in cellular senescence which seems to involve the regulation of the acetylation status of STK11/LBK1. Can deacetylate STK11/LBK1 and thereby increase its activity, cytoplasmic localization and association with STRAD; however, the relevance of such activity in normal cells is unclear. In endothelial cells is shown to inhibit STK11/LBK1 activity and to promote its degradation. Deacetylates SMAD7 at 'Lys-64' and 'Lys-70' thereby promoting its degradation. Deacetylates CIITA and augments its MHC class II transactivation and contributes to its stability. Deacetylates MECOM/EVI1. Deacetylates PML at 'Lys-487' and this deacetylation promotes PML control of PER2 nuclear localization. During the neurogenic transition, represses selective NOTCH1-target genes through histone deacetylation in a BCL6-dependent manner and leading to neuronal differentiation. Regulates the circadian expression of several core clock genes, including BMAL1, RORC, PER2 and CRY1 and plays a critical role in maintaining a controlled rhythmicity in histone acetylation, thereby contributing to circadian chromatin remodeling. Deacetylates BMAL1 and histones at the circadian gene promoters in order to facilitate repression by inhibitory components of the circadian oscillator. Deacetylates PER2, facilitating its ubiquitination and degradation by the proteasome. Protects cardiomyocytes against palmitate-induced apoptosis. Deacetylates XBP1 isoform 2; deacetylation decreases protein stability of XBP1 isoform 2 and inhibits its transcriptional activity. Deacetylates PCK1 and directs its activity toward phosphoenolpyruvate production promoting gluconeogenesis. Involved in the CCAR2-mediated regulation of PCK1 and NR1D1. Deacetylates CTNB1 at 'Lys-49'. In POMC (pro-opiomelanocortin) neurons, required for leptin-induced activation of PI3K signaling. Deacetylates SOX9; promoting SOX9 nuclear localization and transactivation activity. Involved in the regulation of centrosome duplication: Deacetylates CENATAC in G1 phase, allowing for SASS6 accumulation on the centrosome and subsequent procentriole assembly. Deacetylates NDC80/HEC1. In addition to protein deacetylase activity, also acts as a protein-lysine deacylase by mediating protein delactylation, depropionylation and decrotonylation. Mediates depropionylation of Osterix (SP7). Catalyzes decrotonylation of histones; it however does not represent a major histone decrotonylase. Mediates protein delactylation of TEAD1 and YAP1. Its function is as follows. Deacetylates 'Lys-382' of p53/TP53, however with lower activity than isoform 1. In combination, the two isoforms exert an additive effect. Isoform 2 regulates p53/TP53 expression and cellular stress response and is in turn repressed by p53/TP53 presenting a SIRT1 isoform-dependent auto-regulatory loop. Functionally, catalytically inactive 75SirT1 may be involved in regulation of apoptosis. May be involved in protecting chondrocytes from apoptotic death by associating with cytochrome C and interfering with apoptosome assembly. In Mus musculus (Mouse), this protein is NAD-dependent protein deacetylase sirtuin-1 (Sirt1).